The following is a 590-amino-acid chain: 2-isopropylmalate synthase (590 aa).

Positions 40-314 (PRWCAVDLRD…DPQIDFSDID (275 aa)) constitute a Pyruvate carboxyltransferase domain. Mg(2+) contacts are provided by Asp-49, His-253, His-255, and Asn-289. The interval 456–590 (APETESDAKW…SSVPAELAGV (135 aa)) is regulatory domain.

Belongs to the alpha-IPM synthase/homocitrate synthase family. LeuA type 2 subfamily. As to quaternary structure, homodimer. Mg(2+) serves as cofactor.

It is found in the cytoplasm. It carries out the reaction 3-methyl-2-oxobutanoate + acetyl-CoA + H2O = (2S)-2-isopropylmalate + CoA + H(+). It participates in amino-acid biosynthesis; L-leucine biosynthesis; L-leucine from 3-methyl-2-oxobutanoate: step 1/4. Functionally, catalyzes the condensation of the acetyl group of acetyl-CoA with 3-methyl-2-oxobutanoate (2-ketoisovalerate) to form 3-carboxy-3-hydroxy-4-methylpentanoate (2-isopropylmalate). This chain is 2-isopropylmalate synthase, found in Leifsonia xyli subsp. xyli (strain CTCB07).